The chain runs to 246 residues: Vacuolar iron transporter 2 (246 aa).

Residues 1–32 (MVKEFVQDEEKQRLLLDEHTEKHFTAGEVVRD) lie on the Cytoplasmic side of the membrane. A helical transmembrane segment spans residues 33 to 53 (IIIGVSDGLTVPFALAAGLSG). Residues 54–58 (ANAPS) are Vacuolar-facing. The chain crosses the membrane as a helical span at residues 59-79 (ALVLTAGLAEVAAGAISMGLG). At 80–164 (GYLAAKSDAD…PEPRRALMSA (85 aa)) the chain is on the cytoplasmic side. The tract at residues 86–161 (SDADHYHREL…LEKPEPRRAL (76 aa)) is cytoplasmic metal binding domain (MBD). Positions 98, 101, 109, 112, 145, and 149 each coordinate Fe cation. The chain crosses the membrane as a helical span at residues 165–185 (GTIALAYVVGGLVPLLPYMFV). At 186–190 (PTADR) the chain is on the vacuolar side. The helical transmembrane segment at 191 to 211 (AMATSVVVTLAALLFFGYVKG) threads the bilayer. At 212-218 (RFTGNRP) the chain is on the cytoplasmic side. The helical transmembrane segment at 219–239 (FISAFQTAVIGALASAAAFGM) threads the bilayer. Over 240 to 246 (AKAVQSI) the chain is Vacuolar.

It belongs to the CCC1 family. In terms of assembly, homodimer. The dimeric interaction is mediated by both the transmembrane domains (TMDs) and the cytoplasmic metal binding domain (MBD). As to expression, expressed in leaf sheaths and at lower level in leaf blades.

The protein resides in the vacuole membrane. It catalyses the reaction Fe(2+)(in) = Fe(2+)(out). Functionally, vacuolar iron transporter involved in the transfer of iron ions from the cytosol to the vacuole for intracellular iron storage. Vacuolar iron storage is required for seed embryo and seedling development. May be involved in the regulation of iron translocation between flag leaves and seeds. Can transport zinc ions from the cytosol to the vacuole. The protein is Vacuolar iron transporter 2 of Oryza sativa subsp. japonica (Rice).